The chain runs to 348 residues: UDP-3-O-acylglucosamine N-acyltransferase (348 aa).

His237 (proton acceptor) is an active-site residue.

This sequence belongs to the transferase hexapeptide repeat family. LpxD subfamily. Homotrimer.

It carries out the reaction a UDP-3-O-[(3R)-3-hydroxyacyl]-alpha-D-glucosamine + a (3R)-hydroxyacyl-[ACP] = a UDP-2-N,3-O-bis[(3R)-3-hydroxyacyl]-alpha-D-glucosamine + holo-[ACP] + H(+). It functions in the pathway bacterial outer membrane biogenesis; LPS lipid A biosynthesis. Catalyzes the N-acylation of UDP-3-O-acylglucosamine using 3-hydroxyacyl-ACP as the acyl donor. Is involved in the biosynthesis of lipid A, a phosphorylated glycolipid that anchors the lipopolysaccharide to the outer membrane of the cell. The sequence is that of UDP-3-O-acylglucosamine N-acyltransferase from Geotalea daltonii (strain DSM 22248 / JCM 15807 / FRC-32) (Geobacter daltonii).